The sequence spans 450 residues: Transcription factor SCREAM2 (450 aa).

3 disordered regions span residues 1–47, 207–231, and 244–265; these read MNSD…NQND, RQSSSSKMCNSESSSEMRKSSYERE, and GLNYESDDHNTNNNKGKKKGMP. Residues 209–220 are compositionally biased toward low complexity; that stretch reads SSSSKMCNSESS. A compositionally biased stretch (basic and acidic residues) spans 221–230; sequence SEMRKSSYER. Residues 263-312 enclose the bHLH domain; sequence GMPAKNLMAERRRRKKLNDRLYMLRSVVPKISKMDRASILGDAIDYLKEL. One can recognise an ACT domain in the interval 378–450; sequence NIHMFCGRRP…LDTAGYAGLV (73 aa).

In terms of assembly, homodimer. Heterodimers with SPCH, MUTE, and FAMA. Expressed constitutively in roots, leaves, stems, and flowers. Broad expression within stomatal cell lineages of leaf epidermis, except in mature guard-cells.

Its subcellular location is the nucleus. Its function is as follows. Mediates stomatal differentiation in the epidermis probably by controlling successive roles of SPCH, MUTE, and FAMA. Functions as a dimer with SPCH during stomatal initiation. The chain is Transcription factor SCREAM2 (SCRM2) from Arabidopsis thaliana (Mouse-ear cress).